Here is a 24-residue protein sequence, read N- to C-terminus: FLPVLAGIAAKVVPALFCKITKKC.

C18 and C24 are oxidised to a cystine.

It belongs to the frog skin active peptide (FSAP) family. Brevinin subfamily. In terms of tissue distribution, expressed by the skin glands.

The protein resides in the secreted. Its function is as follows. Shows antibacterial activity against representative Gram-negative and Gram-positive bacterial species, and a very high hemolytic activity. In Pelophylax porosus brevipodus (Nagoya Daruma pond frog), this protein is Brevinin-1.